A 527-amino-acid chain; its full sequence is Amine oxidase [flavin-containing] A (527 aa).

Met-1 is subject to N-acetylmethionine. Residues 1–497 (MESLQKTSDA…PSFWERNLPS (497 aa)) lie on the Cytoplasmic side of the membrane. Residue Ser-383 is modified to Phosphoserine. Cys-406 carries the S-8alpha-FAD cysteine modification. Residues 498–518 (VSGLLKIVGFSTSITALWFVM) form a helical; Anchor for type IV membrane protein membrane-spanning segment. The Mitochondrial intermembrane segment spans residues 519-527 (YRFRLLSRS). Positions 520–522 (RFR) are interaction with membrane phospholipid headgroups.

Belongs to the flavin monoamine oxidase family. Monomer, homo- or heterodimer (containing two subunits of similar size). Each subunit contains a covalently bound flavin. Enzymatically active as monomer. FAD is required as a cofactor.

The protein localises to the mitochondrion outer membrane. The catalysed reaction is a secondary aliphatic amine + O2 + H2O = a primary amine + an aldehyde + H2O2. It carries out the reaction a primary methyl amine + O2 + H2O = an aldehyde + H2O2 + NH4(+). The enzyme catalyses (R)-adrenaline + O2 + H2O = (R)-3,4-dihydroxymandelaldehyde + methylamine + H2O2. It catalyses the reaction dopamine + O2 + H2O = 3,4-dihydroxyphenylacetaldehyde + H2O2 + NH4(+). The catalysed reaction is tyramine + O2 + H2O = (4-hydroxyphenyl)acetaldehyde + H2O2 + NH4(+). It carries out the reaction (R)-noradrenaline + O2 + H2O = (R)-3,4-dihydroxymandelaldehyde + H2O2 + NH4(+). The enzyme catalyses serotonin + O2 + H2O = (5-hydroxyindol-3-yl)acetaldehyde + H2O2 + NH4(+). It catalyses the reaction kynuramine + O2 + H2O = 3-(2-aminophenyl)-3-oxopropanal + H2O2 + NH4(+). The catalysed reaction is tryptamine + O2 + H2O = indole-3-acetaldehyde + H2O2 + NH4(+). It carries out the reaction 2-phenylethylamine + O2 + H2O = 2-phenylacetaldehyde + H2O2 + NH4(+). In terms of biological role, catalyzes the oxidative deamination of primary and some secondary amine such as neurotransmitters, with concomitant reduction of oxygen to hydrogen peroxide and has important functions in the metabolism of neuroactive and vasoactive amines in the central nervous system and peripheral tissues. Preferentially oxidizes serotonin. Also catalyzes the oxidative deamination of kynuramine to 3-(2-aminophenyl)-3-oxopropanal that can spontaneously condense to 4-hydroxyquinoline. The chain is Amine oxidase [flavin-containing] A from Bos taurus (Bovine).